A 246-amino-acid chain; its full sequence is DNA repair protein RecO (246 aa).

It belongs to the RecO family.

Functionally, involved in DNA repair and RecF pathway recombination. This is DNA repair protein RecO from Marinobacter nauticus (strain ATCC 700491 / DSM 11845 / VT8) (Marinobacter aquaeolei).